The chain runs to 336 residues: Aspartate--ammonia ligase (336 aa).

It belongs to the class-II aminoacyl-tRNA synthetase family. AsnA subfamily.

The protein resides in the cytoplasm. The enzyme catalyses L-aspartate + NH4(+) + ATP = L-asparagine + AMP + diphosphate + H(+). Its pathway is amino-acid biosynthesis; L-asparagine biosynthesis; L-asparagine from L-aspartate (ammonia route): step 1/1. The polypeptide is Aspartate--ammonia ligase (Ligilactobacillus salivarius (strain UCC118) (Lactobacillus salivarius)).